Reading from the N-terminus, the 287-residue chain is Diaminopimelate epimerase (287 aa).

The substrate site is built by Asn13, Gln46, and Asn66. Cys75 serves as the catalytic Proton donor. Substrate contacts are provided by residues 76 to 77 (GN), Asn166, Asn199, and 217 to 218 (ER). The active-site Proton acceptor is the Cys226. 227 to 228 (GT) serves as a coordination point for substrate.

This sequence belongs to the diaminopimelate epimerase family. Homodimer.

The protein resides in the cytoplasm. The enzyme catalyses (2S,6S)-2,6-diaminopimelate = meso-2,6-diaminopimelate. The protein operates within amino-acid biosynthesis; L-lysine biosynthesis via DAP pathway; DL-2,6-diaminopimelate from LL-2,6-diaminopimelate: step 1/1. In terms of biological role, catalyzes the stereoinversion of LL-2,6-diaminopimelate (L,L-DAP) to meso-diaminopimelate (meso-DAP), a precursor of L-lysine and an essential component of the bacterial peptidoglycan. This chain is Diaminopimelate epimerase, found in Paraburkholderia xenovorans (strain LB400).